Consider the following 359-residue polypeptide: DNA replication and repair protein RecF (359 aa).

30–37 (GPNGSGKT) contacts ATP.

The protein belongs to the RecF family.

It localises to the cytoplasm. The RecF protein is involved in DNA metabolism; it is required for DNA replication and normal SOS inducibility. RecF binds preferentially to single-stranded, linear DNA. It also seems to bind ATP. This Aliivibrio fischeri (strain ATCC 700601 / ES114) (Vibrio fischeri) protein is DNA replication and repair protein RecF.